We begin with the raw amino-acid sequence, 1264 residues long: Regulator of G-protein signaling 22 (1264 aa).

Positions Glu-565 to Gln-587 are disordered. The segment covering Ser-568–Lys-578 has biased composition (polar residues). RGS domains follow at residues Lys-852–Gln-980 and Ala-1021–Asn-1145. Residues Thr-1142–Asp-1174 adopt a coiled-coil conformation.

As to quaternary structure, interacts with GNA11, GNA12 and GNA13. Testis-specific. Expressed in Leydig cells and spermatogenic cells from the spermatogonia to spermatid stages (at protein level).

The protein localises to the cytoplasm. It localises to the nucleus. In terms of biological role, inhibits signal transduction by increasing the GTPase activity of G protein alpha subunits thereby driving them into their inactive GDP-bound form. This chain is Regulator of G-protein signaling 22 (RGS22), found in Homo sapiens (Human).